The following is a 265-amino-acid chain: Type II pantothenate kinase (265 aa).

6–13 (DAGGTLIK) lines the ATP pocket. Glu-70 functions as the Proton acceptor in the catalytic mechanism. Residues Thr-99, 121–125 (GGMIQ), Tyr-137, and Ser-225 contribute to the ATP site.

This sequence belongs to the type II pantothenate kinase family. In terms of assembly, homodimer.

The protein resides in the cytoplasm. The enzyme catalyses (R)-pantothenate + ATP = (R)-4'-phosphopantothenate + ADP + H(+). It functions in the pathway cofactor biosynthesis; coenzyme A biosynthesis; CoA from (R)-pantothenate: step 1/5. Its function is as follows. Catalyzes the phosphorylation of pantothenate (Pan), the first step in CoA biosynthesis. The chain is Type II pantothenate kinase from Staphylococcus epidermidis (strain ATCC 12228 / FDA PCI 1200).